Here is a 611-residue protein sequence, read N- to C-terminus: Actin-binding LIM protein 2 (611 aa).

4 consecutive LIM zinc-binding domains span residues 22-81, 81-141, 151-210, and 210-270; these read ILCN…LYGT, TRCF…VSVG, RSCG…KFGI, and IRCD…ARTE. Zn(2+)-binding residues include Cys-83, Cys-86, His-103, Cys-106, Cys-109, Cys-112, Cys-131, and Cys-134. Zn(2+) is bound by residues Cys-212, Cys-215, His-232, Cys-235, Cys-238, Cys-241, His-260, and Cys-263. The span at 269-278 shows a compositional bias: basic and acidic residues; it reads TEDRNKETRT. Disordered regions lie at residues 269 to 295 and 336 to 527; these read TEDRNKETRTSSESIISVPASSTSGSP and YISH…DQRN. Low complexity-rich tracts occupy residues 279 to 295 and 363 to 372; these read SSESIISVPASSTSGSP and SSPSSTGSVS. Ser-282, Ser-294, Ser-364, and Ser-367 each carry phosphoserine. The span at 393–404 shows a compositional bias: polar residues; that stretch reads SGRSTPSLSVLS. A Phosphoserine modification is found at Ser-452. Position 472 is a phosphothreonine (Thr-472). Residues 473–488 are compositionally biased toward polar residues; that stretch reads RTNSPDLDTQSLSHSS. Residues Ser-476 and Ser-578 each carry the phosphoserine modification. The HP domain maps to 543–611; it reads MREYKIYPYD…NDLKKKALLF (69 aa).

In terms of assembly, interacts with F-actin and ABRA. As to expression, highly expressed in skeletal muscle.

The protein resides in the cytoplasm. In terms of biological role, may act as scaffold protein. May stimulate ABRA activity and ABRA-dependent SRF transcriptional activity. This Homo sapiens (Human) protein is Actin-binding LIM protein 2 (ABLIM2).